The primary structure comprises 863 residues: Transforming growth factor-beta receptor-associated protein 1 homolog (863 aa).

A CNH domain is found at R23 to V297. The stretch at R564–V729 is one CHCR repeat.

The protein belongs to the TRAP1 family. Component of the putative class C core vacuole/endosome tethering (CORVET) complex.

The protein localises to the cytoplasm. The protein resides in the early endosome. Functionally, plays a role in the TGF-beta signaling pathway. Plays a role in vesicle-mediated protein trafficking of the endocytic membrane transport pathway. Believed to act as a component of the putative CORVET endosomal tethering complexes which is proposed to be involved in the Rab5-to-Rab7 endosome conversion probably implicating MON1A/B, and via binding SNAREs and SNARE complexes to mediate tethering and docking events during SNARE-mediated membrane fusion. The CORVET complex is proposed to function as a Rab5 effector to mediate early endosome fusion probably in specific endosome subpopulations. This is Transforming growth factor-beta receptor-associated protein 1 homolog (tgfbrap1) from Danio rerio (Zebrafish).